Here is an 87-residue protein sequence, read N- to C-terminus: UPF0367 protein SynRCC307_0258 (87 aa).

It belongs to the UPF0367 family.

This Synechococcus sp. (strain RCC307) protein is UPF0367 protein SynRCC307_0258.